Reading from the N-terminus, the 1179-residue chain is Integrin alpha-E (1179 aa).

Positions 1–18 are cleaved as a signal peptide; that stretch reads MWLFHTLLCIASLALLAA. Topologically, residues 19-1124 are extracellular; sequence FNVDVARPWL…VFLKDEKYHS (1106 aa). FG-GAP repeat units follow at residues 22-79 and 80-138; these read DVAR…EILC and HPVE…PQAQ. N-linked (GlcNAc...) asparagine glycosylation occurs at Asn-49. 2 cysteine pairs are disulfide-bonded: Cys-70-Cys-79 and Cys-126-Cys-159. The X-domain (extra domain) stretch occupies residues 145–199; the sequence is ENLLDPDARVDTGDCYSNKEGGGEDDVNTARQRRALEKEEEEDKEEEEDEEEEEA. Residues 158–200 form a disordered region; that stretch reads DCYSNKEGGGEDDVNTARQRRALEKEEEEDKEEEEDEEEEEAG. Residues 182 to 200 show a composition bias toward acidic residues; it reads KEEEEDKEEEEDEEEEEAG. The VWFA domain occupies 200–389; sequence GTEIAIILDG…SKLRYNIISM (190 aa). N-linked (GlcNAc...) asparagine glycosylation is found at Asn-271 and Asn-321. One copy of the FG-GAP 3 repeat lies at 390–442; sequence EGTVGDALHYQLAQIGFSAQILDERQVLLGAVGAFDWSGGALLYDTRSRRGRF. Residue Asn-444 is glycosylated (N-linked (GlcNAc...) asparagine). 4 FG-GAP repeats span residues 447 to 499, 500 to 560, 563 to 627, and 631 to 691; these read AAAA…GREA, SFLP…DGSF, ARIL…GLSA, and QRIR…FTPS. Ca(2+) contacts are provided by Asp-522, Asp-524, Asp-526, Asp-530, Asp-586, Ser-588, Asp-590, Asp-594, Asp-654, Ser-656, Asp-658, and Asp-662. A disulfide bridge links Cys-706 with Cys-762. N-linked (GlcNAc...) asparagine glycosylation is found at Asn-726 and Asn-782. Cys-823 and Cys-829 are joined by a disulfide. N-linked (GlcNAc...) asparagine glycosylation occurs at Asn-857. Residues Cys-893 and Cys-907 are joined by a disulfide bond. N-linked (GlcNAc...) asparagine glycans are attached at residues Asn-934 and Asn-954. 2 cysteine pairs are disulfide-bonded: Cys-1008-Cys-1033 and Cys-1041-Cys-1057. Asn-1065 and Asn-1096 each carry an N-linked (GlcNAc...) asparagine glycan. The chain crosses the membrane as a helical span at residues 1125 to 1147; sequence LPIIIKGSVGGLLVLIVILVILF. At 1148–1179 the chain is on the cytoplasmic side; sequence KCGFFKRKYQQLNLESIRKAQLKSENLLEEEN. The GFFKR motif signature appears at 1150-1154; it reads GFFKR.

Belongs to the integrin alpha chain family. As to quaternary structure, heterodimer of an alpha and a beta subunit. The alpha subunit is composed of a heavy and a light chains linked by a disulfide bond. Alpha-E associates with beta-7. As to expression, expressed on a subclass of T-lymphocytes known as intra-epithelial lymphocytes which are located between mucosal epithelial cells.

It localises to the membrane. Its function is as follows. Integrin alpha-E/beta-7 is a receptor for E-cadherin. It mediates adhesion of intra-epithelial T-lymphocytes to epithelial cell monolayers. The protein is Integrin alpha-E (ITGAE) of Homo sapiens (Human).